The primary structure comprises 337 residues: Ribonucleoside-diphosphate reductase small subunit (337 aa).

Positions 1–22 (MDPAVSPASTDPLDTHASGAGA) are disordered. Fe cation contacts are provided by D91, E121, and H124. Y128 is an active-site residue. The chain crosses the membrane as a helical span at residues 177 to 197 (FILMILIEGVFFAASFAAIAY). Residues E184, E218, and H221 each contribute to the Fe cation site.

Belongs to the ribonucleoside diphosphate reductase small chain family. Heterotetramer composed of a homodimer of the large subunit (R1) and a homodimer of the small subunit (R2). Larger multisubunit protein complex are also active, composed of (R1)n(R2)n. It depends on Fe cation as a cofactor.

Its subcellular location is the host membrane. The catalysed reaction is a 2'-deoxyribonucleoside 5'-diphosphate + [thioredoxin]-disulfide + H2O = a ribonucleoside 5'-diphosphate + [thioredoxin]-dithiol. Its function is as follows. Ribonucleoside-diphosphate reductase holoenzyme provides the precursors necessary for viral DNA synthesis. Allows virus growth in non-dividing cells, as well as reactivation from latency in infected hosts. Catalyzes the biosynthesis of deoxyribonucleotides from the corresponding ribonucleotides. The chain is Ribonucleoside-diphosphate reductase small subunit from Human herpesvirus 2 (strain 333) (HHV-2).